We begin with the raw amino-acid sequence, 842 residues long: Leucine--tRNA ligase (842 aa).

The 'HIGH' region signature appears at 62-72 (PYPSGDLHMGH). A disordered region spans residues 390–414 (GDEDPAETGVATAGEGTLKNSGELD). Positions 607–611 (AMSKS) match the 'KMSKS' region motif. Lys-610 is an ATP binding site.

This sequence belongs to the class-I aminoacyl-tRNA synthetase family.

The protein localises to the cytoplasm. It carries out the reaction tRNA(Leu) + L-leucine + ATP = L-leucyl-tRNA(Leu) + AMP + diphosphate. This is Leucine--tRNA ligase from Paenarthrobacter aurescens (strain TC1).